Here is a 232-residue protein sequence, read N- to C-terminus: Beta-casein (232 aa).

Positions M1–A15 are cleaved as a signal peptide. Residues S30, S32, S33, and S34 each carry the phosphoserine modification.

It belongs to the beta-casein family. In terms of tissue distribution, mammary gland specific. Secreted in milk.

The protein resides in the secreted. Functionally, important role in determination of the surface properties of the casein micelles. The chain is Beta-casein (CSN2) from Camelus dromedarius (Dromedary).